A 118-amino-acid polypeptide reads, in one-letter code: Large ribosomal subunit protein bL20 (118 aa).

It belongs to the bacterial ribosomal protein bL20 family.

Functionally, binds directly to 23S ribosomal RNA and is necessary for the in vitro assembly process of the 50S ribosomal subunit. It is not involved in the protein synthesizing functions of that subunit. This Caldicellulosiruptor saccharolyticus (strain ATCC 43494 / DSM 8903 / Tp8T 6331) protein is Large ribosomal subunit protein bL20.